The following is a 175-amino-acid chain: Adenine phosphoribosyltransferase (175 aa).

The protein belongs to the purine/pyrimidine phosphoribosyltransferase family. As to quaternary structure, homodimer.

The protein resides in the cytoplasm. The enzyme catalyses AMP + diphosphate = 5-phospho-alpha-D-ribose 1-diphosphate + adenine. Its pathway is purine metabolism; AMP biosynthesis via salvage pathway; AMP from adenine: step 1/1. Functionally, catalyzes a salvage reaction resulting in the formation of AMP, that is energically less costly than de novo synthesis. The protein is Adenine phosphoribosyltransferase of Francisella philomiragia subsp. philomiragia (strain ATCC 25017 / CCUG 19701 / FSC 153 / O#319-036).